A 249-amino-acid chain; its full sequence is tRNA pseudouridine synthase A (249 aa).

Residue aspartate 53 is the Nucleophile of the active site. Residue tyrosine 111 participates in substrate binding.

It belongs to the tRNA pseudouridine synthase TruA family. In terms of assembly, homodimer.

It carries out the reaction uridine(38/39/40) in tRNA = pseudouridine(38/39/40) in tRNA. In terms of biological role, formation of pseudouridine at positions 38, 39 and 40 in the anticodon stem and loop of transfer RNAs. The sequence is that of tRNA pseudouridine synthase A from Streptococcus pyogenes serotype M3 (strain ATCC BAA-595 / MGAS315).